The following is a 287-amino-acid chain: Acetyl-coenzyme A carboxylase carboxyl transferase subunit beta (287 aa).

The 263-residue stretch at 25–287 (IWTKCSGCVQ…KLTQQSFSEK (263 aa)) folds into the CoA carboxyltransferase N-terminal domain. Positions 29, 32, 48, and 51 each coordinate Zn(2+). The C4-type zinc-finger motif lies at 29 to 51 (CSGCVQLLYTKELERNLQVCPKC).

Belongs to the AccD/PCCB family. As to quaternary structure, acetyl-CoA carboxylase is a heterohexamer composed of biotin carboxyl carrier protein (AccB), biotin carboxylase (AccC) and two subunits each of ACCase subunit alpha (AccA) and ACCase subunit beta (AccD). Requires Zn(2+) as cofactor.

Its subcellular location is the cytoplasm. The enzyme catalyses N(6)-carboxybiotinyl-L-lysyl-[protein] + acetyl-CoA = N(6)-biotinyl-L-lysyl-[protein] + malonyl-CoA. The protein operates within lipid metabolism; malonyl-CoA biosynthesis; malonyl-CoA from acetyl-CoA: step 1/1. Functionally, component of the acetyl coenzyme A carboxylase (ACC) complex. Biotin carboxylase (BC) catalyzes the carboxylation of biotin on its carrier protein (BCCP) and then the CO(2) group is transferred by the transcarboxylase to acetyl-CoA to form malonyl-CoA. This chain is Acetyl-coenzyme A carboxylase carboxyl transferase subunit beta, found in Blochmanniella floridana.